The chain runs to 25 residues: Glutamine synthetase 2 isozyme (25 aa).

Belongs to the glutamine synthetase family. As to quaternary structure, homohexamer.

It localises to the plastid. The protein resides in the chloroplast. The enzyme catalyses L-glutamate + NH4(+) + ATP = L-glutamine + ADP + phosphate + H(+). In terms of biological role, plays a key role in the nitrogen metabolism of microorganisms, animals and plants. The polypeptide is Glutamine synthetase 2 isozyme (Emiliania huxleyi (Coccolithophore)).